Here is a 381-residue protein sequence, read N- to C-terminus: Chaperone protein DnaJ (381 aa).

In terms of domain architecture, J spans 5-70 (DYYEVLGCDR…QKRGAYDRYG (66 aa)). A CR-type zinc finger spans residues 136-214 (GKTAQISIPT…CGGAGRVTRE (79 aa)). Residues Cys149, Cys152, Cys166, Cys169, Cys188, Cys191, Cys202, and Cys205 each contribute to the Zn(2+) site. CXXCXGXG motif repeat units follow at residues 149–156 (CEVCSGSG), 166–173 (CRTCNGAG), 188–195 (CPSCQGRG), and 202–209 (CPNCGGAG).

It belongs to the DnaJ family. Homodimer. The cofactor is Zn(2+).

The protein localises to the cytoplasm. Participates actively in the response to hyperosmotic and heat shock by preventing the aggregation of stress-denatured proteins and by disaggregating proteins, also in an autonomous, DnaK-independent fashion. Unfolded proteins bind initially to DnaJ; upon interaction with the DnaJ-bound protein, DnaK hydrolyzes its bound ATP, resulting in the formation of a stable complex. GrpE releases ADP from DnaK; ATP binding to DnaK triggers the release of the substrate protein, thus completing the reaction cycle. Several rounds of ATP-dependent interactions between DnaJ, DnaK and GrpE are required for fully efficient folding. Also involved, together with DnaK and GrpE, in the DNA replication of plasmids through activation of initiation proteins. The chain is Chaperone protein DnaJ from Azorhizobium caulinodans (strain ATCC 43989 / DSM 5975 / JCM 20966 / LMG 6465 / NBRC 14845 / NCIMB 13405 / ORS 571).